The chain runs to 673 residues: Probable potassium transport system protein Kup 1 (673 aa).

Helical transmembrane passes span 14–34 (GAGFIIAMGIVYGDIGTSPLY), 58–78 (LSLIIWTLTLITTVKYVWIAL), 101–121 (WLIIPAMIGGAALLSDGALTP), 147–167 (LPIVIITLAILAILFLIQRFG), 175–195 (FGPVMFIWFSFFGITGLINLF), 196–216 (GDFSVLQAINPYWAIHLLLSP), 220–240 (AGIFVLGSVFLATTGAEALYS), 252–272 (VSWPFVKVCIILSYCGQAAWL), 294–314 (LIIFSVILATLAAIIASQALI), 345–365 (LYIPAVNLGLWLAASFIVVYF), 374–394 (AYGLAITVTMLMTTILLTVYL), 403–423 (VFVVLFFGAFIFIEGLFFAAS), and 427–447 (FLHGGYVVVILAALILFVMAI).

This sequence belongs to the HAK/KUP transporter (TC 2.A.72) family.

It is found in the cell membrane. It carries out the reaction K(+)(in) + H(+)(in) = K(+)(out) + H(+)(out). Its function is as follows. Transport of potassium into the cell. Likely operates as a K(+):H(+) symporter. This is Probable potassium transport system protein Kup 1 from Lactococcus lactis subsp. cremoris (strain SK11).